Here is a 72-residue protein sequence, read N- to C-terminus: Conotoxin 3 (72 aa).

An N-terminal signal peptide occupies residues Met1 to Ala22. The propeptide occupies Asp23–Arg46. Disulfide bonds link Cys47–Cys61, Cys54–Cys64, and Cys60–Cys71.

Belongs to the conotoxin O1 superfamily. In terms of tissue distribution, expressed by the venom duct.

It is found in the secreted. This is Conotoxin 3 from Conus striatus (Striated cone).